The following is a 360-amino-acid chain: Protein RecA (360 aa).

66–73 (GPESSGKT) serves as a coordination point for ATP. Residues 330 to 360 (DAKAIEERENPEKVKQDKEVPVNKDASDEKK) are disordered.

The protein belongs to the RecA family.

Its subcellular location is the cytoplasm. Its function is as follows. Can catalyze the hydrolysis of ATP in the presence of single-stranded DNA, the ATP-dependent uptake of single-stranded DNA by duplex DNA, and the ATP-dependent hybridization of homologous single-stranded DNAs. It interacts with LexA causing its activation and leading to its autocatalytic cleavage. The sequence is that of Protein RecA from Lactobacillus johnsonii (strain CNCM I-12250 / La1 / NCC 533).